We begin with the raw amino-acid sequence, 242 residues long: Probable transcriptional regulatory protein Cthe_2075 (242 aa).

This sequence belongs to the TACO1 family.

It localises to the cytoplasm. This is Probable transcriptional regulatory protein Cthe_2075 from Acetivibrio thermocellus (strain ATCC 27405 / DSM 1237 / JCM 9322 / NBRC 103400 / NCIMB 10682 / NRRL B-4536 / VPI 7372) (Clostridium thermocellum).